Here is a 278-residue protein sequence, read N- to C-terminus: 3-methyl-2-oxobutanoate hydroxymethyltransferase (278 aa).

The Mg(2+) site is built by D43 and D82. 3-methyl-2-oxobutanoate-binding positions include 43–44, D82, and K112; that span reads DS. E114 lines the Mg(2+) pocket. Catalysis depends on E181, which acts as the Proton acceptor.

Belongs to the PanB family. In terms of assembly, homodecamer; pentamer of dimers. It depends on Mg(2+) as a cofactor.

It localises to the cytoplasm. The catalysed reaction is 3-methyl-2-oxobutanoate + (6R)-5,10-methylene-5,6,7,8-tetrahydrofolate + H2O = 2-dehydropantoate + (6S)-5,6,7,8-tetrahydrofolate. Its pathway is cofactor biosynthesis; (R)-pantothenate biosynthesis; (R)-pantoate from 3-methyl-2-oxobutanoate: step 1/2. Functionally, catalyzes the reversible reaction in which hydroxymethyl group from 5,10-methylenetetrahydrofolate is transferred onto alpha-ketoisovalerate to form ketopantoate. The sequence is that of 3-methyl-2-oxobutanoate hydroxymethyltransferase from Bacillus cereus (strain ATCC 10987 / NRS 248).